The primary structure comprises 293 residues: Glutamyl-Q tRNA(Asp) synthetase (293 aa).

L-glutamate contacts are provided by residues R26 to S30 and D62. Residues P29–N39 carry the 'HIGH' region motif. Residues C118, C120, Y131, and C135 each contribute to the Zn(2+) site. Residues Y178 and R196 each contribute to the L-glutamate site. The 'KMSKS' region motif lies at K234–R238. K237 is an ATP binding site.

Belongs to the class-I aminoacyl-tRNA synthetase family. GluQ subfamily. The cofactor is Zn(2+).

Its function is as follows. Catalyzes the tRNA-independent activation of glutamate in presence of ATP and the subsequent transfer of glutamate onto a tRNA(Asp). Glutamate is transferred on the 2-amino-5-(4,5-dihydroxy-2-cyclopenten-1-yl) moiety of the queuosine in the wobble position of the QUC anticodon. This Synechococcus sp. (strain CC9605) protein is Glutamyl-Q tRNA(Asp) synthetase.